A 212-amino-acid polypeptide reads, in one-letter code: Thymidylate kinase (212 aa).

Position 10–17 (10–17 (GGEGSGKT)) interacts with ATP.

Belongs to the thymidylate kinase family.

The catalysed reaction is dTMP + ATP = dTDP + ADP. Phosphorylation of dTMP to form dTDP in both de novo and salvage pathways of dTTP synthesis. The sequence is that of Thymidylate kinase from Marinomonas sp. (strain MWYL1).